Reading from the N-terminus, the 179-residue chain is Adenine phosphoribosyltransferase (179 aa).

This sequence belongs to the purine/pyrimidine phosphoribosyltransferase family. In terms of assembly, homodimer.

It is found in the cytoplasm. The catalysed reaction is AMP + diphosphate = 5-phospho-alpha-D-ribose 1-diphosphate + adenine. It functions in the pathway purine metabolism; AMP biosynthesis via salvage pathway; AMP from adenine: step 1/1. Catalyzes a salvage reaction resulting in the formation of AMP, that is energically less costly than de novo synthesis. This chain is Adenine phosphoribosyltransferase, found in Bradyrhizobium sp. (strain ORS 278).